The primary structure comprises 360 residues: MKTSMQRKLDQLSTRLAELNDLLSRENVTADLDQYRKLTREHAELGPVVEQYALWRQSRSDEAAAQELLADPSMRDFAEDEIRSAREGMARLETELQKMLLPKDPNDDRNIFLEIRAGTGGDESALFAGDLLRMYLRFAERQRWQVEMMSESASDLGGYKEVIVRIAGQGAYSRLKFESGGHRVQRVPATETQGRIHTSACTVAVMPEADEIGEVEINPADLRIDTFRASGAGGQHINKTDSAVRVTHIPTGIVVECQDDRSQHKNKDRALKVLAARIKDKQYHEQHAKEAATRKSLIGSGDRSERIRTYNFPQGRMTDHRINLTLYRLEAIMDGDLDELIGALVTEHQAELLASLGEAD.

Gln235 carries the N5-methylglutamine modification.

The protein belongs to the prokaryotic/mitochondrial release factor family. In terms of processing, methylated by PrmC. Methylation increases the termination efficiency of RF1.

Its subcellular location is the cytoplasm. Functionally, peptide chain release factor 1 directs the termination of translation in response to the peptide chain termination codons UAG and UAA. The chain is Peptide chain release factor 1 from Burkholderia cenocepacia (strain ATCC BAA-245 / DSM 16553 / LMG 16656 / NCTC 13227 / J2315 / CF5610) (Burkholderia cepacia (strain J2315)).